Consider the following 384-residue polypeptide: Putative glutamate--cysteine ligase 2-1 (384 aa).

The protein belongs to the glutamate--cysteine ligase type 2 family. YbdK subfamily.

It catalyses the reaction L-cysteine + L-glutamate + ATP = gamma-L-glutamyl-L-cysteine + ADP + phosphate + H(+). Functionally, ATP-dependent carboxylate-amine ligase which exhibits weak glutamate--cysteine ligase activity. The sequence is that of Putative glutamate--cysteine ligase 2-1 from Paenarthrobacter aurescens (strain TC1).